The following is a 294-amino-acid chain: 4-hydroxy-tetrahydrodipicolinate synthase (294 aa).

Threonine 45 is a binding site for pyruvate. Tyrosine 133 acts as the Proton donor/acceptor in catalysis. The active-site Schiff-base intermediate with substrate is lysine 161. A pyruvate-binding site is contributed by isoleucine 203.

The protein belongs to the DapA family. In terms of assembly, homotetramer; dimer of dimers.

Its subcellular location is the cytoplasm. It catalyses the reaction L-aspartate 4-semialdehyde + pyruvate = (2S,4S)-4-hydroxy-2,3,4,5-tetrahydrodipicolinate + H2O + H(+). The protein operates within amino-acid biosynthesis; L-lysine biosynthesis via DAP pathway; (S)-tetrahydrodipicolinate from L-aspartate: step 3/4. Its function is as follows. Catalyzes the condensation of (S)-aspartate-beta-semialdehyde [(S)-ASA] and pyruvate to 4-hydroxy-tetrahydrodipicolinate (HTPA). The protein is 4-hydroxy-tetrahydrodipicolinate synthase of Buchnera aphidicola subsp. Acyrthosiphon pisum (strain APS) (Acyrthosiphon pisum symbiotic bacterium).